A 151-amino-acid chain; its full sequence is Cell division protein SepF (151 aa).

The tract at residues glutamate 31–asparagine 53 is disordered.

It belongs to the SepF family. As to quaternary structure, homodimer. Interacts with FtsZ.

It is found in the cytoplasm. Functionally, cell division protein that is part of the divisome complex and is recruited early to the Z-ring. Probably stimulates Z-ring formation, perhaps through the cross-linking of FtsZ protofilaments. Its function overlaps with FtsA. In Halalkalibacterium halodurans (strain ATCC BAA-125 / DSM 18197 / FERM 7344 / JCM 9153 / C-125) (Bacillus halodurans), this protein is Cell division protein SepF.